We begin with the raw amino-acid sequence, 20 residues long: Alpha-conotoxin-like ts14a (20 aa).

Intrachain disulfides connect Cys-3–Cys-16 and Cys-14–Cys-20.

Expressed by the venom duct.

It localises to the secreted. Alpha-conotoxins act on postsynaptic membranes, they bind to the nicotinic acetylcholine receptors (nAChR) and thus inhibit them. In Conus tessulatus (Tessellate cone), this protein is Alpha-conotoxin-like ts14a.